The sequence spans 579 residues: Methionine--tRNA ligase (579 aa).

Residues 14 to 24 (PYINGVKHLGN) carry the 'HIGH' region motif. Zn(2+) contacts are provided by cysteine 146, cysteine 149, cysteine 159, and cysteine 162. Positions 346-350 (KFSTS) match the 'KMSKS' region motif. Residue threonine 349 participates in ATP binding.

Belongs to the class-I aminoacyl-tRNA synthetase family. MetG type 1 subfamily. In terms of assembly, monomer. Requires Zn(2+) as cofactor.

It localises to the cytoplasm. It catalyses the reaction tRNA(Met) + L-methionine + ATP = L-methionyl-tRNA(Met) + AMP + diphosphate. Its function is as follows. Is required not only for elongation of protein synthesis but also for the initiation of all mRNA translation through initiator tRNA(fMet) aminoacylation. This Hyphomonas neptunium (strain ATCC 15444) protein is Methionine--tRNA ligase.